The chain runs to 928 residues: Chitin synthase 2 (928 aa).

Disordered stretches follow at residues 1–45 (MAYN…EAYA) and 110–179 (AYYT…SPAP). A compositionally biased stretch (polar residues) spans 17–28 (PSAQPQYDSRSP). Residues 130–140 (PSHDEPYRPDT) are compositionally biased toward basic and acidic residues. 9 consecutive transmembrane segments (helical) span residues 472–492 (SAFG…YVAL), 570–589 (WLNG…YQLW), 613–633 (LFAW…TASL), 644–664 (TVLG…CFIL), 678–698 (MMMV…SIFL), 723–743 (FFGL…ASFL), 753–773 (CFLQ…IYAF), 854–874 (VTAW…IAGF), and 893–913 (VILW…CWFL).

The protein belongs to the chitin synthase family. Class I subfamily.

The protein resides in the cell membrane. The catalysed reaction is [(1-&gt;4)-N-acetyl-beta-D-glucosaminyl](n) + UDP-N-acetyl-alpha-D-glucosamine = [(1-&gt;4)-N-acetyl-beta-D-glucosaminyl](n+1) + UDP + H(+). Functionally, polymerizes chitin, a structural polymer of the cell wall and septum, by transferring the sugar moiety of UDP-GlcNAc to the non-reducing end of the growing chitin polymer. CHS2 plays a synergistic role to CHS1 in normal yeast cell reproductive growth, even if this role is less predominant than for CHS1. With CHS3, plays an important role in virulence. This is Chitin synthase 2 from Exophiala dermatitidis (Black yeast-like fungus).